The sequence spans 329 residues: L-arabinose-binding periplasmic protein (329 aa).

Positions 1 to 23 (MHKFTKALAAIGLAAVMSQSAMA) are cleaved as a signal peptide.

The protein belongs to the bacterial solute-binding protein 2 family.

The protein localises to the periplasm. Its function is as follows. Involved in the high-affinity L-arabinose membrane transport system. Binds with high affinity to arabinose, but can also bind D-galactose (approximately 2-fold reduction) and D-fucose (approximately 40-fold reduction). The sequence is that of L-arabinose-binding periplasmic protein (araF) from Escherichia coli (strain K12).